Here is a 584-residue protein sequence, read N- to C-terminus: Cilia- and flagella-associated protein 184 (584 aa).

Basic and acidic residues-rich tracts occupy residues 1–18 (MDSH…EEGL), 42–57 (PEPK…REPE), and 67–82 (SKAK…HVEV). A disordered region spans residues 1–243 (MDSHYGDIEG…ASTEEFEWTA (243 aa)). Acidic residues predominate over residues 119–146 (DKDEDEDEDEDEDEDEDEDEDEDEDEGE). Over residues 189 to 232 (AKEKARESLKKRDSEEIEGTDRERHKSTEEQLHPGEAKEEEKQK) the composition is skewed to basic and acidic residues. 2 coiled-coil regions span residues 317–470 (LAML…SNVQ) and 530–561 (LLGK…KRHH).

Belongs to the CFAP184 family. As to quaternary structure, forms a complex with CFAP263; the interaction is required for functional activity in cilia.

The protein localises to the cell projection. Its subcellular location is the cilium. It is found in the cytoplasm. The protein resides in the cytoskeleton. It localises to the microtubule organizing center. The protein localises to the centrosome. Its function is as follows. In complex with CFAP263, acts as a regulator of ciliary beating that connects radial spoke 3 (RS3) to the inner dynein arm (IDA) and the nexin-dynein regulatory complex (N-DRC). The complex is positioned parallel to N-DRC and forms a connection between the arch at the base of RS3, the IDA tail and N-DRC. The chain is Cilia- and flagella-associated protein 184 (Cfap184) from Mus musculus (Mouse).